The sequence spans 643 residues: Zinc finger protein 64 (643 aa).

11 C2H2-type zinc fingers span residues 173-195 (HKCE…MRCH), 201-223 (YKCK…LRIH), 229-251 (FKCQ…LRSH), 297-322 (FNCR…LRIH), 328-350 (HKCE…MRCH), 356-378 (HKCH…LRIH), 384-406 (YKCQ…LRSH), 412-434 (FQCW…MIVH), 440-463 (FKCE…RIKH), 465-487 (FKCL…SRLH), and 493-515 (EKCP…SRVH). The Zn(2+) site is built by cysteine 495, cysteine 498, histidine 511, histidine 515, cysteine 523, cysteine 526, histidine 539, and histidine 544. Positions 538-552 (KHIDKVHREGAKTEN) are enriched in basic and acidic residues. Residues 538-571 (KHIDKVHREGAKTENRAPPGKDGPGESGPHHVPN) form a disordered region. A C2H2-type 12 zinc finger spans residues 578 to 600 (FGCDKCGASFVRDDSLRCHRKQH).

Belongs to the krueppel C2H2-type zinc-finger protein family. In terms of assembly, interacts with NOTCH1. Widely expressed. Expressed in the brain, spleen, liver, and heart.

The protein resides in the nucleus. Its function is as follows. May be involved in the regulation of mesenchymal cell differentiation through transactivation of NOTCH1 target genes. This Mus musculus (Mouse) protein is Zinc finger protein 64.